The sequence spans 110 residues: Toxin HigB-2 (110 aa).

Its function is as follows. Toxic component of a type II toxin-antitoxin (TA) system. Inhibits translation by cleavage of mRNA. The polypeptide is Toxin HigB-2 (higB-2) (Vibrio cholerae serotype O1 (strain ATCC 39315 / El Tor Inaba N16961)).